We begin with the raw amino-acid sequence, 183 residues long: Phosphinothricin N-acetyltransferase (183 aa).

An N-acetyltransferase domain is found at 8 to 173; sequence ADIRRATEAD…WQLDFSLPVP (166 aa). Residues 91–93, 99–104, and N130 contribute to the acetyl-CoA site; these read VYV and RTGLGS.

Belongs to the acetyltransferase family. PAT/BAR subfamily.

It catalyses the reaction phosphinothricin + acetyl-CoA = N-acetylphosphinothricin + CoA + H(+). Functionally, inactivates phosphinothricin (PPT) by transfer of an acetyl group from acetyl CoA. Can also acetylate demethylphosphinothricin but not PTT or glutamate. This enzyme is an effector of phosphinothricin tripeptide (PTT or bialaphos) resistance. The sequence is that of Phosphinothricin N-acetyltransferase from Streptomyces hygroscopicus.